The following is a 124-amino-acid chain: Trophoblast-specific protein alpha (124 aa).

Residues 1–18 (MTPTIFLVILCLGVASAV) form the signal peptide. Disordered stretches follow at residues 51-74 (KLHSSENDQETEGSNIEMSASGQL) and 91-124 (FEEEENKPQPVVDDPEFEDYTESGDGFFVPNQPQ). Residues 62 to 74 (EGSNIEMSASGQL) are compositionally biased toward polar residues. Residues 103 to 112 (DDPEFEDYTE) show a composition bias toward acidic residues.

It localises to the secreted. The protein resides in the extracellular space. In terms of biological role, it may be a growth factor/hormone, perhaps involved in interaction between the maternal and fetal systems in maintenance of pregnancy. The polypeptide is Trophoblast-specific protein alpha (Tpbpa) (Mus musculus (Mouse)).